Here is a 975-residue protein sequence, read N- to C-terminus: Glycine dehydrogenase (decarboxylating) (975 aa).

Lys-723 is modified (N6-(pyridoxal phosphate)lysine).

The protein belongs to the GcvP family. As to quaternary structure, the glycine cleavage system is composed of four proteins: P, T, L and H. Pyridoxal 5'-phosphate is required as a cofactor.

The enzyme catalyses N(6)-[(R)-lipoyl]-L-lysyl-[glycine-cleavage complex H protein] + glycine + H(+) = N(6)-[(R)-S(8)-aminomethyldihydrolipoyl]-L-lysyl-[glycine-cleavage complex H protein] + CO2. Functionally, the glycine cleavage system catalyzes the degradation of glycine. The P protein binds the alpha-amino group of glycine through its pyridoxal phosphate cofactor; CO(2) is released and the remaining methylamine moiety is then transferred to the lipoamide cofactor of the H protein. The polypeptide is Glycine dehydrogenase (decarboxylating) (Burkholderia lata (strain ATCC 17760 / DSM 23089 / LMG 22485 / NCIMB 9086 / R18194 / 383)).